The following is a 174-amino-acid chain: Endoribonuclease YbeY (174 aa).

Residues His-129, His-133, and His-139 each contribute to the Zn(2+) site.

This sequence belongs to the endoribonuclease YbeY family. Zn(2+) is required as a cofactor.

It localises to the cytoplasm. Its function is as follows. Single strand-specific metallo-endoribonuclease involved in late-stage 70S ribosome quality control and in maturation of the 3' terminus of the 16S rRNA. The sequence is that of Endoribonuclease YbeY from Lactobacillus helveticus (strain DPC 4571).